A 334-amino-acid chain; its full sequence is Holliday junction branch migration complex subunit RuvB (334 aa).

The tract at residues 4–186 (ADRLIAPISN…FGIVQRLEYY (183 aa)) is large ATPase domain (RuvB-L). ATP contacts are provided by residues isoleucine 25, arginine 26, glycine 67, lysine 70, threonine 71, threonine 72, 133 to 135 (EDY), arginine 176, tyrosine 186, and arginine 223. Threonine 71 serves as a coordination point for Mg(2+). Residues 187-257 (KVADLQHIVQ…TADRALNMLD (71 aa)) form a small ATPAse domain (RuvB-S) region. The interval 260 to 334 (HQGFDYMDRK…RAYLHFGIEK (75 aa)) is head domain (RuvB-H). Arginine 315 and arginine 320 together coordinate DNA.

This sequence belongs to the RuvB family. As to quaternary structure, homohexamer. Forms an RuvA(8)-RuvB(12)-Holliday junction (HJ) complex. HJ DNA is sandwiched between 2 RuvA tetramers; dsDNA enters through RuvA and exits via RuvB. An RuvB hexamer assembles on each DNA strand where it exits the tetramer. Each RuvB hexamer is contacted by two RuvA subunits (via domain III) on 2 adjacent RuvB subunits; this complex drives branch migration. In the full resolvosome a probable DNA-RuvA(4)-RuvB(12)-RuvC(2) complex forms which resolves the HJ.

It is found in the cytoplasm. The catalysed reaction is ATP + H2O = ADP + phosphate + H(+). Its function is as follows. The RuvA-RuvB-RuvC complex processes Holliday junction (HJ) DNA during genetic recombination and DNA repair, while the RuvA-RuvB complex plays an important role in the rescue of blocked DNA replication forks via replication fork reversal (RFR). RuvA specifically binds to HJ cruciform DNA, conferring on it an open structure. The RuvB hexamer acts as an ATP-dependent pump, pulling dsDNA into and through the RuvAB complex. RuvB forms 2 homohexamers on either side of HJ DNA bound by 1 or 2 RuvA tetramers; 4 subunits per hexamer contact DNA at a time. Coordinated motions by a converter formed by DNA-disengaged RuvB subunits stimulates ATP hydrolysis and nucleotide exchange. Immobilization of the converter enables RuvB to convert the ATP-contained energy into a lever motion, pulling 2 nucleotides of DNA out of the RuvA tetramer per ATP hydrolyzed, thus driving DNA branch migration. The RuvB motors rotate together with the DNA substrate, which together with the progressing nucleotide cycle form the mechanistic basis for DNA recombination by continuous HJ branch migration. Branch migration allows RuvC to scan DNA until it finds its consensus sequence, where it cleaves and resolves cruciform DNA. This is Holliday junction branch migration complex subunit RuvB from Vibrio cholerae serotype O1 (strain ATCC 39541 / Classical Ogawa 395 / O395).